A 266-amino-acid polypeptide reads, in one-letter code: Thymidylate synthase (266 aa).

Arg-24 provides a ligand contact to dUMP. His-54 serves as a coordination point for (6R)-5,10-methylene-5,6,7,8-tetrahydrofolate. A dUMP-binding site is contributed by 129–130 (RR). Residue Cys-149 is the Nucleophile of the active site. DUMP contacts are provided by residues 169-172 (RSAD), Asn-180, and 210-212 (HIY). Residue Asp-172 coordinates (6R)-5,10-methylene-5,6,7,8-tetrahydrofolate. Position 265 (Ala-265) interacts with (6R)-5,10-methylene-5,6,7,8-tetrahydrofolate.

It belongs to the thymidylate synthase family. Bacterial-type ThyA subfamily. Homodimer.

Its subcellular location is the cytoplasm. It catalyses the reaction dUMP + (6R)-5,10-methylene-5,6,7,8-tetrahydrofolate = 7,8-dihydrofolate + dTMP. It functions in the pathway pyrimidine metabolism; dTTP biosynthesis. Functionally, catalyzes the reductive methylation of 2'-deoxyuridine-5'-monophosphate (dUMP) to 2'-deoxythymidine-5'-monophosphate (dTMP) while utilizing 5,10-methylenetetrahydrofolate (mTHF) as the methyl donor and reductant in the reaction, yielding dihydrofolate (DHF) as a by-product. This enzymatic reaction provides an intracellular de novo source of dTMP, an essential precursor for DNA biosynthesis. This Corynebacterium glutamicum (strain R) protein is Thymidylate synthase.